The sequence spans 85 residues: UPF0386 protein Meso_1721 (85 aa).

The protein belongs to the UPF0386 family.

The polypeptide is UPF0386 protein Meso_1721 (Chelativorans sp. (strain BNC1)).